We begin with the raw amino-acid sequence, 148 residues long: Lysozyme C (148 aa).

The N-terminal stretch at 1–18 (MKALIVLGLVLLSVMVQG) is a signal peptide. The region spanning 19–148 (KVFERCELAR…VRQYVQGCGV (130 aa)) is the C-type lysozyme domain. Intrachain disulfides connect cysteine 24–cysteine 146, cysteine 48–cysteine 134, cysteine 83–cysteine 99, and cysteine 95–cysteine 113. Active-site residues include glutamate 53 and aspartate 71.

This sequence belongs to the glycosyl hydrolase 22 family. As to quaternary structure, monomer.

The enzyme catalyses Hydrolysis of (1-&gt;4)-beta-linkages between N-acetylmuramic acid and N-acetyl-D-glucosamine residues in a peptidoglycan and between N-acetyl-D-glucosamine residues in chitodextrins.. Lysozymes have primarily a bacteriolytic function; those in tissues and body fluids are associated with the monocyte-macrophage system and enhance the activity of immunoagents. The chain is Lysozyme C (LYZ) from Gorilla gorilla gorilla (Western lowland gorilla).